The chain runs to 754 residues: Polyadenylate-binding protein, cytoplasmic and nuclear (754 aa).

The segment covering Met-1–Ala-25 has biased composition (polar residues). The segment at Met-1–Ser-52 is disordered. Low complexity predominate over residues Ser-36–Asn-46. RRM domains lie at Ala-51 to Arg-129, Gly-139 to Ser-216, Thr-232 to Lys-309, and Val-335 to Arg-465. 2 disordered regions span residues Lys-365–Asp-420 and Arg-595–Pro-648. The segment covering Val-366 to Asp-420 has biased composition (basic and acidic residues). Over residues Gly-610–Gly-633 the composition is skewed to gly residues. The span at Gln-634–Pro-648 shows a compositional bias: low complexity. Residues Ala-649–Lys-726 form the PABC domain. The interval Gly-729–Ser-754 is disordered.

It belongs to the polyadenylate-binding protein type-1 family.

Its subcellular location is the cytoplasm. The protein resides in the nucleus. In terms of biological role, binds the poly(A) tail of mRNA. Appears to be an important mediator of the multiple roles of the poly(A) tail in mRNA biogenesis, stability and translation. In the nucleus, involved in both mRNA cleavage and polyadenylation. Is also required for efficient mRNA export to the cytoplasm. Acts in concert with a poly(A)-specific nuclease (PAN) to affect poly(A) tail shortening, which may occur concomitantly with either nucleocytoplasmic mRNA transport or translational initiation. In the cytoplasm, stimulates translation initiation and regulates mRNA decay through translation termination-coupled poly(A) shortening, probably mediated by PAN. In Aspergillus clavatus (strain ATCC 1007 / CBS 513.65 / DSM 816 / NCTC 3887 / NRRL 1 / QM 1276 / 107), this protein is Polyadenylate-binding protein, cytoplasmic and nuclear (pab1).